A 65-amino-acid chain; its full sequence is MTADISAAPVAPQMRPLGPLIPASELNIWHSAGDALAAAKRHQQRVRTWARAAYQRERARATPRG.

This is an uncharacterized protein from Rhizobium fredii (Sinorhizobium fredii).